A 303-amino-acid chain; its full sequence is RELT-like protein 2 (303 aa).

The chain crosses the membrane as a helical span at residues 15 to 35 (LYMLFLLVLVFFLMGLVGFMI). 2 disordered regions span residues 46–67 (CRTS…DDDM) and 111–303 (SSLQ…AGGV). Phosphoserine is present on Ser52. Basic and acidic residues-rich tracts occupy residues 148-158 (RSKEGKSRPRP) and 172-188 (THIE…DGSP). Positions 194-212 (GSGGGQDPGGGQGPGGGQP) are enriched in gly residues.

The protein belongs to the RELT family. As to quaternary structure, interacts with RELT, RELL1, OXSR1, PLSCR1 and TRAF2.

It localises to the cell membrane. In terms of biological role, induces activation of MAPK14/p38 cascade, when overexpressed. Induces apoptosis, when overexpressed. The chain is RELT-like protein 2 (RELL2) from Bos taurus (Bovine).